The sequence spans 361 residues: Phosphoserine aminotransferase (361 aa).

Arginine 43 serves as a coordination point for L-glutamate. Pyridoxal 5'-phosphate contacts are provided by residues 77–78 (AS), tryptophan 103, threonine 153, aspartate 173, and glutamine 196. The residue at position 197 (lysine 197) is an N6-(pyridoxal phosphate)lysine. 238-239 (NT) is a binding site for pyridoxal 5'-phosphate.

This sequence belongs to the class-V pyridoxal-phosphate-dependent aminotransferase family. SerC subfamily. In terms of assembly, homodimer. It depends on pyridoxal 5'-phosphate as a cofactor.

The protein localises to the cytoplasm. The enzyme catalyses O-phospho-L-serine + 2-oxoglutarate = 3-phosphooxypyruvate + L-glutamate. The catalysed reaction is 4-(phosphooxy)-L-threonine + 2-oxoglutarate = (R)-3-hydroxy-2-oxo-4-phosphooxybutanoate + L-glutamate. Its pathway is amino-acid biosynthesis; L-serine biosynthesis; L-serine from 3-phospho-D-glycerate: step 2/3. The protein operates within cofactor biosynthesis; pyridoxine 5'-phosphate biosynthesis; pyridoxine 5'-phosphate from D-erythrose 4-phosphate: step 3/5. Catalyzes the reversible conversion of 3-phosphohydroxypyruvate to phosphoserine and of 3-hydroxy-2-oxo-4-phosphonooxybutanoate to phosphohydroxythreonine. In Pseudomonas paraeruginosa (strain DSM 24068 / PA7) (Pseudomonas aeruginosa (strain PA7)), this protein is Phosphoserine aminotransferase.